The following is a 345-amino-acid chain: Phosphoribosylformylglycinamidine cyclo-ligase (345 aa).

The protein belongs to the AIR synthase family.

The protein resides in the cytoplasm. The enzyme catalyses 2-formamido-N(1)-(5-O-phospho-beta-D-ribosyl)acetamidine + ATP = 5-amino-1-(5-phospho-beta-D-ribosyl)imidazole + ADP + phosphate + H(+). The protein operates within purine metabolism; IMP biosynthesis via de novo pathway; 5-amino-1-(5-phospho-D-ribosyl)imidazole from N(2)-formyl-N(1)-(5-phospho-D-ribosyl)glycinamide: step 2/2. This Anaeromyxobacter sp. (strain K) protein is Phosphoribosylformylglycinamidine cyclo-ligase.